Here is a 178-residue protein sequence, read N- to C-terminus: Large ribosomal subunit protein uL6 (178 aa).

This sequence belongs to the universal ribosomal protein uL6 family. Part of the 50S ribosomal subunit.

Its function is as follows. This protein binds to the 23S rRNA, and is important in its secondary structure. It is located near the subunit interface in the base of the L7/L12 stalk, and near the tRNA binding site of the peptidyltransferase center. This Helicobacter pylori (strain P12) protein is Large ribosomal subunit protein uL6.